A 215-amino-acid chain; its full sequence is Large ribosomal subunit protein uL3 (215 aa).

Residues 136–155 (GVSISHRSHGSTGQRQDPGK) form a disordered region. Gln151 is modified (N5-methylglutamine).

The protein belongs to the universal ribosomal protein uL3 family. In terms of assembly, part of the 50S ribosomal subunit. Forms a cluster with proteins L14 and L19. In terms of processing, methylated by PrmB.

Functionally, one of the primary rRNA binding proteins, it binds directly near the 3'-end of the 23S rRNA, where it nucleates assembly of the 50S subunit. This Rickettsia conorii (strain ATCC VR-613 / Malish 7) protein is Large ribosomal subunit protein uL3.